Consider the following 250-residue polypeptide: Ribosomal RNA small subunit methyltransferase J (250 aa).

Residues 101-102, 117-118, 153-154, and aspartate 171 each bind S-adenosyl-L-methionine; these read RD, ER, and SS.

The protein belongs to the methyltransferase superfamily. RsmJ family.

Its subcellular location is the cytoplasm. It catalyses the reaction guanosine(1516) in 16S rRNA + S-adenosyl-L-methionine = N(2)-methylguanosine(1516) in 16S rRNA + S-adenosyl-L-homocysteine + H(+). In terms of biological role, specifically methylates the guanosine in position 1516 of 16S rRNA. This Shigella dysenteriae serotype 1 (strain Sd197) protein is Ribosomal RNA small subunit methyltransferase J.